The primary structure comprises 87 residues: HssA/B-like protein 54 (87 aa).

This sequence belongs to the hssA/B family.

This is HssA/B-like protein 54 (hssl54) from Dictyostelium discoideum (Social amoeba).